A 650-amino-acid chain; its full sequence is DNA gyrase subunit B (650 aa).

The 115-residue stretch at N429–P543 folds into the Toprim domain. The Mg(2+) site is built by E435, D508, and D510.

Belongs to the type II topoisomerase GyrB family. Heterotetramer, composed of two GyrA and two GyrB chains. In the heterotetramer, GyrA contains the active site tyrosine that forms a transient covalent intermediate with DNA, while GyrB binds cofactors and catalyzes ATP hydrolysis. The cofactor is Mg(2+). Mn(2+) serves as cofactor. Requires Ca(2+) as cofactor.

Its subcellular location is the cytoplasm. It catalyses the reaction ATP-dependent breakage, passage and rejoining of double-stranded DNA.. Its function is as follows. A type II topoisomerase that negatively supercoils closed circular double-stranded (ds) DNA in an ATP-dependent manner to modulate DNA topology and maintain chromosomes in an underwound state. Negative supercoiling favors strand separation, and DNA replication, transcription, recombination and repair, all of which involve strand separation. Also able to catalyze the interconversion of other topological isomers of dsDNA rings, including catenanes and knotted rings. Type II topoisomerases break and join 2 DNA strands simultaneously in an ATP-dependent manner. In Streptococcus pyogenes serotype M1, this protein is DNA gyrase subunit B.